The sequence spans 473 residues: Serine palmitoyltransferase 1 (473 aa).

Residues 1–15 (MAMAAEQWVLVEMVQ) lie on the Lumenal side of the membrane. The interval 1–66 (MAMAAEQWVL…KEELIEEWQP (66 aa)) is interaction with SPTLC2. Residues 16–36 (ALYEAPAYHLILEGILILWII) traverse the membrane as a helical segment. Over 37-473 (RLVFSKTYKL…IREAAQAVLL (437 aa)) the chain is Cytoplasmic. Tyr164 carries the phosphotyrosine; by ABL modification.

It belongs to the class-II pyridoxal-phosphate-dependent aminotransferase family. In terms of assembly, component of the serine palmitoyltransferase (SPT) complex, which is also composed of SPTLC2 or SPTLC3 and SPTSSA or SPTSSB. The heterodimer with SPTLC2 or SPTLC3 forms the catalytic core of the enzyme, while SPTSSA or SPTSSB subunits determine substrate specificity. SPT also interacts with ORMDL proteins, especially ORMDL3, which negatively regulate SPT activity in the presence of ceramides. Forms dimers of heterodimers with SPTLC2. Interacts with RTN4. It depends on pyridoxal 5'-phosphate as a cofactor. Phosphorylation at Tyr-164 inhibits activity and promotes cell survival.

It is found in the endoplasmic reticulum membrane. The catalysed reaction is L-serine + hexadecanoyl-CoA + H(+) = 3-oxosphinganine + CO2 + CoA. It carries out the reaction octadecanoyl-CoA + L-serine + H(+) = 3-oxoeicosasphinganine + CO2 + CoA. The enzyme catalyses tetradecanoyl-CoA + L-serine + H(+) = 3-oxohexadecasphinganine + CO2 + CoA. It catalyses the reaction dodecanoyl-CoA + L-serine + H(+) = 3-oxotetradecasphinganine + CO2 + CoA. It functions in the pathway lipid metabolism; sphingolipid metabolism. Its activity is regulated as follows. SPT complex catalytic activity is negatively regulated by ORMDL proteins, including ORMDL3, in the presence of ceramides. This mechanism allows to maintain ceramide levels at sufficient concentrations for the production of complex sphingolipids, but which prevents the accumulation of ceramides to levels that trigger apoptosis. Functionally, component of the serine palmitoyltransferase multisubunit enzyme (SPT) that catalyzes the initial and rate-limiting step in sphingolipid biosynthesis by condensing L-serine and activated acyl-CoA (most commonly palmitoyl-CoA) to form long-chain bases. The SPT complex is also composed of SPTLC2 or SPTLC3 and SPTSSA or SPTSSB. Within this complex, the heterodimer with SPTLC2 or SPTLC3 forms the catalytic core. The composition of the serine palmitoyltransferase (SPT) complex determines the substrate preference. The SPTLC1-SPTLC2-SPTSSA complex shows a strong preference for C16-CoA substrate, while the SPTLC1-SPTLC3-SPTSSA isozyme uses both C14-CoA and C16-CoA as substrates, with a slight preference for C14-CoA. The SPTLC1-SPTLC2-SPTSSB complex shows a strong preference for C18-CoA substrate, while the SPTLC1-SPTLC3-SPTSSB isozyme displays an ability to use a broader range of acyl-CoAs, without apparent preference. Required for adipocyte cell viability and metabolic homeostasis. This Cricetulus griseus (Chinese hamster) protein is Serine palmitoyltransferase 1 (SPTLC1).